Reading from the N-terminus, the 443-residue chain is Protein PRRC1 (443 aa).

The segment at 1-165 (MMEESGIETT…FSAPPVTGIL (165 aa)) is disordered. Positions 29–45 (EAHSAATSSFSSPNVSG) are enriched in polar residues. A compositionally biased stretch (pro residues) spans 59–72 (PSLPPVQPSAPPPF). Low complexity-rich tracts occupy residues 81–96 (VPLSGTSVPPSVSPSP) and 109–134 (PPATSASGALLSAPPSGPPISGFSVG). Position 406 is a phosphoserine (Ser406).

This sequence belongs to the PRRC1 family. Interacts with PRKAR1A; resulting in PKA activation.

It is found in the golgi apparatus. It localises to the cytoplasm. In terms of biological role, may act as a regulator of the protein kinase A (PKA) during embryonic development. The polypeptide is Protein PRRC1 (Prrc1) (Mus musculus (Mouse)).